Reading from the N-terminus, the 632-residue chain is FAD-binding monooxygenase ausB (632 aa).

Residues Met-1 to His-50 form a disordered region. Polar residues-rich tracts occupy residues Pro-15–Ser-24 and Ala-31–Leu-43. FAD is bound by residues Thr-116–Trp-119, Asp-128–Ile-129, and Tyr-134. An NADP(+)-binding site is contributed by Met-126 to Asp-128. NADP(+) contacts are provided by residues Thr-269–Gln-275 and Arg-292–Thr-293.

This sequence belongs to the FAD-binding monooxygenase family. The cofactor is FAD.

The catalysed reaction is protoaustinoid A + AH2 + O2 = berkeleyone A + A + H2O. It participates in secondary metabolite biosynthesis; terpenoid biosynthesis. Its function is as follows. FAD-binding monooxygenase; part of the gene cluster that mediates the biosynthesis of calidodehydroaustin, a fungal meroterpenoid. The first step of the pathway is the synthesis of 3,5-dimethylorsellinic acid by the polyketide synthase ausA. 3,5-dimethylorsellinic acid is then prenylated by the polyprenyl transferase ausN. Further epoxidation by the FAD-dependent monooxygenase ausM and cyclization by the probable terpene cyclase ausL lead to the formation of protoaustinoid A. Protoaustinoid A is then oxidized to spiro-lactone preaustinoid A3 by the combined action of the FAD-binding monooxygenases ausB and ausC, and the dioxygenase ausE. Acid-catalyzed keto-rearrangement and ring contraction of the tetraketide portion of preaustinoid A3 by ausJ lead to the formation of preaustinoid A4. The aldo-keto reductase ausK, with the help of ausH, is involved in the next step by transforming preaustinoid A4 into isoaustinone which is in turn hydroxylated by the P450 monooxygenase ausI to form austinolide. The cytochrome P450 monooxygenase ausG modifies austinolide to austinol. Austinol is further acetylated to austin by the O-acetyltransferase ausP, which spontaneously changes to dehydroaustin. The cytochrome P450 monooxygenase ausR then converts dehydroaustin is into 7-dehydrodehydroaustin. The hydroxylation catalyzed by ausR permits the O-acetyltransferase ausQ to add an additional acetyl group to the molecule, leading to the formation of acetoxydehydroaustin. The short chain dehydrogenase ausT catalyzes the reduction of the double bond present between carbon atoms 1 and 2 to convert 7-dehydrodehydroaustin into 1,2-dihydro-7-hydroxydehydroaustin. AusQ catalyzes not only an acetylation reaction but also the addition of the PKS ausV diketide product to 1,2-dihydro-7-hydroxydehydroaustin, forming precalidodehydroaustin. Finally, the iron/alpha-ketoglutarate-dependent dioxygenase converts precalidodehydroaustin into calidodehydroaustin. In Aspergillus calidoustus, this protein is FAD-binding monooxygenase ausB.